We begin with the raw amino-acid sequence, 357 residues long: tRNA/tmRNA (uracil-C(5))-methyltransferase (357 aa).

5 residues coordinate S-adenosyl-L-methionine: Gln-180, Tyr-209, Asn-214, Glu-230, and Asp-290. Residue Cys-315 is the Nucleophile of the active site. Glu-349 (proton acceptor) is an active-site residue.

It belongs to the class I-like SAM-binding methyltransferase superfamily. RNA M5U methyltransferase family. TrmA subfamily.

The enzyme catalyses uridine(54) in tRNA + S-adenosyl-L-methionine = 5-methyluridine(54) in tRNA + S-adenosyl-L-homocysteine + H(+). The catalysed reaction is uridine(341) in tmRNA + S-adenosyl-L-methionine = 5-methyluridine(341) in tmRNA + S-adenosyl-L-homocysteine + H(+). Dual-specificity methyltransferase that catalyzes the formation of 5-methyluridine at position 54 (m5U54) in all tRNAs, and that of position 341 (m5U341) in tmRNA (transfer-mRNA). The protein is tRNA/tmRNA (uracil-C(5))-methyltransferase of Campylobacter jejuni (strain RM1221).